The primary structure comprises 326 residues: Isoaspartyl peptidase/L-asparaginase (326 aa).

Thr-185 serves as the catalytic Nucleophile. Substrate contacts are provided by residues 213–216 (RVGD) and 236–239 (TGHG).

It belongs to the Ntn-hydrolase family. Heterodimer of an alpha and beta chain produced by autocleavage. This heterodimer may then dimerize in turn, giving rise to a heterotetramer. Cleaved into an alpha and beta chain by autocatalysis; this activates the enzyme. The N-terminal residue of the beta subunit is responsible for the nucleophile hydrolase activity. High expression in the heart and brain while low to minimal expression in the other tissues. In ocular tissues, high levels is observed in the optic nerve and retina while relatively low levels of expression are detected in the iris-ciliary body, lens or retinal pigment epithelium.

Its subcellular location is the cytoplasm. It carries out the reaction L-asparagine + H2O = L-aspartate + NH4(+). The catalysed reaction is Cleavage of a beta-linked Asp residue from the N-terminus of a polypeptide.. In terms of biological role, has both L-asparaginase and beta-aspartyl peptidase activity. May be involved in the production of L-aspartate, which can act as an excitatory neurotransmitter in some brain regions. Is highly active with L-Asp beta-methyl ester. Besides, has catalytic activity toward beta-aspartyl dipeptides and their methyl esters, including beta-L-Asp-L-Phe, beta-L-Asp-L-Phe methyl ester (aspartame), beta-L-Asp-L-Ala, beta-L-Asp-L-Leu and beta-L-Asp-L-Lys. Does not have aspartylglucosaminidase activity and is inactive toward GlcNAc-L-Asn. Likewise, has no activity toward glutamine. In Mus musculus (Mouse), this protein is Isoaspartyl peptidase/L-asparaginase (Asrgl1).